The chain runs to 137 residues: Cellular retinoic acid-binding protein 1 (137 aa).

The Nuclear localization signal signature appears at 21–31 (KALGVNAMLRK). An all-trans-retinoate-binding site is contributed by 132–134 (RIY).

It belongs to the calycin superfamily. Fatty-acid binding protein (FABP) family.

The protein localises to the cytoplasm. In terms of biological role, cytosolic CRABPs may regulate the access of retinoic acid to the nuclear retinoic acid receptors. This chain is Cellular retinoic acid-binding protein 1 (crabp1), found in Hippocampus comes (Tiger tail seahorse).